The sequence spans 888 residues: Alanine--tRNA ligase (888 aa).

4 residues coordinate Zn(2+): His-564, His-568, Cys-676, and His-680.

The protein belongs to the class-II aminoacyl-tRNA synthetase family. The cofactor is Zn(2+).

The protein resides in the cytoplasm. The enzyme catalyses tRNA(Ala) + L-alanine + ATP = L-alanyl-tRNA(Ala) + AMP + diphosphate. Its function is as follows. Catalyzes the attachment of alanine to tRNA(Ala) in a two-step reaction: alanine is first activated by ATP to form Ala-AMP and then transferred to the acceptor end of tRNA(Ala). Also edits incorrectly charged Ser-tRNA(Ala) and Gly-tRNA(Ala) via its editing domain. This Bartonella quintana (strain Toulouse) (Rochalimaea quintana) protein is Alanine--tRNA ligase.